Consider the following 90-residue polypeptide: ATP synthase subunit c (90 aa).

Transmembrane regions (helical) follow at residues 4–24 (FVYS…GCGI) and 53–73 (IGLA…LILI).

Belongs to the ATPase C chain family. As to quaternary structure, F-type ATPases have 2 components, F(1) - the catalytic core - and F(0) - the membrane proton channel. F(1) has five subunits: alpha(3), beta(3), gamma(1), delta(1), epsilon(1). F(0) has three main subunits: a(1), b(2) and c(10-14). The alpha and beta chains form an alternating ring which encloses part of the gamma chain. F(1) is attached to F(0) by a central stalk formed by the gamma and epsilon chains, while a peripheral stalk is formed by the delta and b chains.

The protein localises to the cell inner membrane. Functionally, f(1)F(0) ATP synthase produces ATP from ADP in the presence of a proton or sodium gradient. F-type ATPases consist of two structural domains, F(1) containing the extramembraneous catalytic core and F(0) containing the membrane proton channel, linked together by a central stalk and a peripheral stalk. During catalysis, ATP synthesis in the catalytic domain of F(1) is coupled via a rotary mechanism of the central stalk subunits to proton translocation. Its function is as follows. Key component of the F(0) channel; it plays a direct role in translocation across the membrane. A homomeric c-ring of between 10-14 subunits forms the central stalk rotor element with the F(1) delta and epsilon subunits. This is ATP synthase subunit c from Syntrophobacter fumaroxidans (strain DSM 10017 / MPOB).